The sequence spans 372 residues: DNA replication and repair protein RecF (372 aa).

30–37 contacts ATP; sequence GENGQGKT.

The protein belongs to the RecF family.

It localises to the cytoplasm. Its function is as follows. The RecF protein is involved in DNA metabolism; it is required for DNA replication and normal SOS inducibility. RecF binds preferentially to single-stranded, linear DNA. It also seems to bind ATP. The sequence is that of DNA replication and repair protein RecF from Anaeromyxobacter dehalogenans (strain 2CP-1 / ATCC BAA-258).